The chain runs to 152 residues: Small ribosomal subunit protein uS13z/uS13y/uS13x (152 aa).

Ser-2 carries the N-acetylserine modification.

It belongs to the universal ribosomal protein uS13 family.

It is found in the cytoplasm. Its function is as follows. Located at the top of the head of the 40S subunit, it contacts several helices of the 18S rRNA. This is Small ribosomal subunit protein uS13z/uS13y/uS13x (RPS18A) from Arabidopsis thaliana (Mouse-ear cress).